Consider the following 468-residue polypeptide: ATP synthase subunit beta (468 aa).

An ATP-binding site is contributed by 155-162; that stretch reads GGAGVGKT.

The protein belongs to the ATPase alpha/beta chains family. As to quaternary structure, F-type ATPases have 2 components, CF(1) - the catalytic core - and CF(0) - the membrane proton channel. CF(1) has five subunits: alpha(3), beta(3), gamma(1), delta(1), epsilon(1). CF(0) has three main subunits: a(1), b(2) and c(9-12). The alpha and beta chains form an alternating ring which encloses part of the gamma chain. CF(1) is attached to CF(0) by a central stalk formed by the gamma and epsilon chains, while a peripheral stalk is formed by the delta and b chains.

It localises to the cell membrane. It carries out the reaction ATP + H2O + 4 H(+)(in) = ADP + phosphate + 5 H(+)(out). Its function is as follows. Produces ATP from ADP in the presence of a proton gradient across the membrane. The catalytic sites are hosted primarily by the beta subunits. The sequence is that of ATP synthase subunit beta from Streptococcus agalactiae serotype Ia (strain ATCC 27591 / A909 / CDC SS700).